The chain runs to 347 residues: Terpene synthase 2 (347 aa).

Mg(2+) is bound by residues aspartate 103, asparagine 247, serine 251, and glutamate 255. The D(D/E)XX(D/E) motif motif lies at 103 to 107; sequence DDLLE. The NSE motif motif lies at 247–255; sequence NDIFSLKKE. Residues 329–336 carry the WxxxxxRY motif motif; sequence WCSKSTRY.

It belongs to the terpene synthase family. The cofactor is Mg(2+).

Its function is as follows. Terpene synthase that may be involved in the production of volatile terpenoids. Does not show detectable terpene products with either farnesyl diphosphate (FPP) or geranyl diphosphate (GPP). P.polycephalum has a unique biology and these volatile terpenoids could function in internal communication of P.polycephalum, to mark the territory that have been explored, or they may be involved in chemotaxis. The chain is Terpene synthase 2 from Physarum polycephalum (Slime mold).